Consider the following 407-residue polypeptide: tRNA pseudouridine synthase 4 (407 aa).

The tract at residues 83-105 (FRPAPPHPNDRNRRRRKSNRLPD) is disordered. Aspartate 115 acts as the Nucleophile in catalysis. Residues 274 to 298 (TEQDINPQDGDEKINAKSPTTNSVT) form a disordered region. The residue at position 291 (serine 291) is a Phosphoserine. Residue threonine 293 is modified to Phosphothreonine. Serine 296 is subject to Phosphoserine. At threonine 406 the chain carries Phosphothreonine.

The protein belongs to the pseudouridine synthase TruB family.

Its subcellular location is the nucleus. It is found in the mitochondrion. It catalyses the reaction uridine(55) in tRNA = pseudouridine(55) in tRNA. The enzyme catalyses a uridine in mRNA = a pseudouridine in mRNA. In terms of biological role, responsible for synthesis of pseudouridine from uracil-55 in the psi GC loop of transfer RNAs. Also catalyzes pseudouridylation of mRNAs with the consensus sequence 5'-GGUUCRA-3'. The polypeptide is tRNA pseudouridine synthase 4 (Schizosaccharomyces pombe (strain 972 / ATCC 24843) (Fission yeast)).